The primary structure comprises 304 residues: Olfactory receptor 52A4 (304 aa).

Topologically, residues 1-32 (MALPITNGTLFMPFVLTFIGIPGFESVQCWIG) are extracellular. Asparagine 7 is a glycosylation site (N-linked (GlcNAc...) asparagine). A helical membrane pass occupies residues 33–53 (IPFCATYVIALIGNSLLLIII). The Cytoplasmic segment spans residues 54–61 (KSEPSLHE). Residues 62–82 (PMYIFLATLGATDISLSTSIV) traverse the membrane as a helical segment. Topologically, residues 83-103 (PKMLDIFWFHLPEIYFDACLF) are extracellular. A disulfide bond links cysteine 101 and cysteine 184. Residues 104–124 (QMWLIHTFQGIESGVLLAMAL) form a helical membrane-spanning segment. Residues 125-146 (DRCVAICYPLRRAIVFTRQLVT) are Cytoplasmic-facing. The helical transmembrane segment at 147–167 (YIVVGVTLRPAILVIPCLLLI) threads the bilayer. Residues 168–203 (KCHLKLYRTKLIYHTYCERVALVKLATEDVYINKVY) lie on the Extracellular side of the membrane. The helical transmembrane segment at 204–224 (GILGAFIVGGLDFIFITLSYI) threads the bilayer. At 225 to 255 (QIFITVFHLPLKEARLKVFNTCIPHIYVFFQ) the chain is on the cytoplasmic side. Residues 256-276 (FYLLAFFFIFYSQIWILYPII) traverse the membrane as a helical segment. The Extracellular segment spans residues 277-279 (CTY). Residues 280–300 (HLVQSLPTGPTIPQPLYLWVK) form a helical membrane-spanning segment. Residues 301-304 (DQTH) lie on the Cytoplasmic side of the membrane.

The protein belongs to the G-protein coupled receptor 1 family.

The protein localises to the cell membrane. In terms of biological role, odorant receptor. This is Olfactory receptor 52A4 from Homo sapiens (Human).